Consider the following 254-residue polypeptide: L-rhamnose 1-dehydrogenase (NAD(P)(+)) (254 aa).

The NADP(+) site is built by Gly-13, Ser-15, Ile-18, Asp-64, Val-65, and Asn-91. The active-site Proton donor is Ser-144. Ser-144, Ser-146, Gln-154, and Tyr-157 together coordinate beta-L-rhamnose. Tyr-157 and Lys-161 together coordinate NADP(+). Tyr-157 functions as the Proton acceptor in the catalytic mechanism. The active-site Lowers pKa of active site Tyr is the Lys-161. Thr-189 provides a ligand contact to beta-L-rhamnose. Position 190 (Ile-190) interacts with NADP(+). Asn-195 contacts beta-L-rhamnose.

The protein belongs to the short-chain dehydrogenases/reductases (SDR) family.

It catalyses the reaction L-rhamnofuranose + NAD(+) = L-rhamnono-1,4-lactone + NADH + H(+). It carries out the reaction L-rhamnofuranose + NADP(+) = L-rhamnono-1,4-lactone + NADPH + H(+). It functions in the pathway carbohydrate degradation; L-rhamnose degradation. NAD(P)-dependent dehydrogenase that catalyzes the oxidation of L-rhamnose to L-rhamnono-1,4-lactone. Also shows high activity with L-lyxose and low activity with L-mannose. Can utilize either NAD(+) or NADP(+), with a slight preference for NADP(+). Catalyzes the first step in an alternative pathway for rhamnose utilization that does not involve phosphorylated intermediates. The protein is L-rhamnose 1-dehydrogenase (NAD(P)(+)) of Sphingomonas sp. (strain SKA58).